A 77-amino-acid polypeptide reads, in one-letter code: Metallocarboxypeptidase inhibitor (77 aa).

Positions 1–32 (MAQKFTILFTILLVVIAAQDVMAQDATLTKLF) are cleaved as a signal peptide. Position 33 is a pyrrolidone carboxylic acid (Gln33). Cystine bridges form between Cys39–Cys55, Cys43–Cys58, and Cys49–Cys65. The propeptide at 70 to 77 (GRAMAIGV) is hydrophobic peptide.

The protein to potato MCPI. Ovaries.

May play a defensive role against insect attacks. This is Metallocarboxypeptidase inhibitor from Solanum lycopersicum (Tomato).